A 123-amino-acid polypeptide reads, in one-letter code: Large ribosomal subunit protein uL14 (123 aa).

Belongs to the universal ribosomal protein uL14 family. In terms of assembly, part of the 50S ribosomal subunit. Forms a cluster with proteins L3 and L19. In the 70S ribosome, L14 and L19 interact and together make contacts with the 16S rRNA in bridges B5 and B8.

Binds to 23S rRNA. Forms part of two intersubunit bridges in the 70S ribosome. The polypeptide is Large ribosomal subunit protein uL14 (Proteus mirabilis (strain HI4320)).